Reading from the N-terminus, the 522-residue chain is Cytochrome P450 26C1 (522 aa).

A helical transmembrane segment spans residues 9-29 (LSVLGAAGTALLCAGLLLSLA). Residue Cys459 participates in heme binding.

This sequence belongs to the cytochrome P450 family. It depends on heme as a cofactor. Detected in most tissues at very low level.

The protein localises to the membrane. The catalysed reaction is an organic molecule + reduced [NADPH--hemoprotein reductase] + O2 = an alcohol + oxidized [NADPH--hemoprotein reductase] + H2O + H(+). It carries out the reaction all-trans-retinoate + reduced [NADPH--hemoprotein reductase] + O2 = all-trans-4-hydroxyretinoate + oxidized [NADPH--hemoprotein reductase] + H2O + H(+). The enzyme catalyses all-trans-4-hydroxyretinoate + reduced [NADPH--hemoprotein reductase] + O2 = all-trans-4-oxoretinoate + oxidized [NADPH--hemoprotein reductase] + 2 H2O + H(+). It catalyses the reaction 9-cis-retinoate + reduced [NADPH--hemoprotein reductase] + O2 = 9-cis-4-hydroxyretinoate + oxidized [NADPH--hemoprotein reductase] + H2O + H(+). The catalysed reaction is 9-cis-4-hydroxyretinoate + reduced [NADPH--hemoprotein reductase] + O2 = 9-cis-4-oxoretinoate + oxidized [NADPH--hemoprotein reductase] + 2 H2O + H(+). It carries out the reaction all-trans-4-hydroxy-13,14-dihydroretinoate + reduced [NADPH--hemoprotein reductase] + O2 = all-trans-4-oxo-13,14-dihydroretinoate + oxidized [NADPH--hemoprotein reductase] + 2 H2O + H(+). The enzyme catalyses all-trans-13,14-dihydroretinoate + reduced [NADPH--hemoprotein reductase] + O2 = all-trans-4-hydroxy-13,14-dihydroretinoate + oxidized [NADPH--hemoprotein reductase] + H2O + H(+). Its function is as follows. A cytochrome P450 monooxygenase involved in the metabolism of retinoates (RAs), the active metabolites of vitamin A, and critical signaling molecules in animals. RAs exist as at least four different isomers: all-trans-RA (atRA), 9-cis-RA, 13-cis-RA, and 9,13-dicis-RA, where atRA is considered to be the biologically active isomer, although 9-cis-RA and 13-cis-RA also have activity. Catalyzes the oxidation of atRA primarily at C-4. Oxidation of atRA limits its biological activity and initiates a degradative process leading to its eventual elimination, thereby contributes to the regulation of atRA homeostasis and signaling. Able to metabolize other RAs such as 9-cis with high efficiency. Can oxidize all-trans-13,14-dihydroretinoate (DRA) to metabolites which could include all-trans-4-oxo-DRA, all-trans-4-hydroxy-DRA, all-trans-5,8-epoxy-DRA, and all-trans-18-hydroxy-DRA. Shares sequence similarity with other CYP26 family members, but has higher affinity to 9-cis-RA and is much less sensitive to the inhibitory effects of ketoconazole. In cooperation with Cyp26a1, contributes to the CNS patterning and the development of regions of higher visual acuity. In Homo sapiens (Human), this protein is Cytochrome P450 26C1 (CYP26C1).